The primary structure comprises 865 residues: Alanine--tRNA ligase (865 aa).

Residues His-554, His-558, Cys-656, and His-660 each coordinate Zn(2+).

This sequence belongs to the class-II aminoacyl-tRNA synthetase family. Zn(2+) serves as cofactor.

It localises to the cytoplasm. It catalyses the reaction tRNA(Ala) + L-alanine + ATP = L-alanyl-tRNA(Ala) + AMP + diphosphate. Catalyzes the attachment of alanine to tRNA(Ala) in a two-step reaction: alanine is first activated by ATP to form Ala-AMP and then transferred to the acceptor end of tRNA(Ala). Also edits incorrectly charged Ser-tRNA(Ala) and Gly-tRNA(Ala) via its editing domain. The protein is Alanine--tRNA ligase of Francisella tularensis subsp. tularensis (strain FSC 198).